A 349-amino-acid chain; its full sequence is Cobalt-precorrin-5B C(1)-methyltransferase (349 aa).

It belongs to the CbiD family.

The catalysed reaction is Co-precorrin-5B + S-adenosyl-L-methionine = Co-precorrin-6A + S-adenosyl-L-homocysteine. It participates in cofactor biosynthesis; adenosylcobalamin biosynthesis; cob(II)yrinate a,c-diamide from sirohydrochlorin (anaerobic route): step 6/10. Its function is as follows. Catalyzes the methylation of C-1 in cobalt-precorrin-5B to form cobalt-precorrin-6A. The polypeptide is Cobalt-precorrin-5B C(1)-methyltransferase (Saccharolobus solfataricus (strain ATCC 35092 / DSM 1617 / JCM 11322 / P2) (Sulfolobus solfataricus)).